The sequence spans 417 residues: Mitochondrial inner membrane i-AAA protease supercomplex subunit MGR1 (417 aa).

The tract at residues 1-28 is disordered; it reads MAVFTPPSGNSNSTDHTHTQDDHDKDDN. Residues 1–56 are Mitochondrial intermembrane-facing; the sequence is MAVFTPPSGNSNSTDHTHTQDDHDKDDNDIKKFYIRPSLGLKLWGPLVPAPDNLPG. Over residues 15 to 28 the composition is skewed to basic and acidic residues; the sequence is DHTHTQDDHDKDDN. The chain crosses the membrane as a helical span at residues 57 to 73; sequence LYTLITIQSAVGFFALW. The Mitochondrial matrix segment spans residues 74-151; that stretch reads RLRRLYKLPP…RQSRFVSVRK (78 aa). Residues 152 to 169 form a helical membrane-spanning segment; sequence LLWGLFGSLLLSQSLLEL. At 170-417 the chain is on the mitochondrial intermembrane side; sequence TRLNFLKYDP…PKALTNEKTH (248 aa). Polar residues predominate over residues 391-401; the sequence is SHTKTPTSTDQ. The disordered stretch occupies residues 391 to 417; that stretch reads SHTKTPTSTDQPLPGPTPKALTNEKTH.

This sequence belongs to the MGR1 family. In terms of assembly, component of the mitochondrial inner membrane i-AAA protease supercomplex composed of MGR1, MGR3 and YME1. With MGR3, forms a subcomplex that binds to YME1 and to substrates to facilitate proteolysis. Interacts directly with YME1.

The protein resides in the mitochondrion inner membrane. Its function is as follows. Component of the mitochondrial inner membrane i-AAA protease supercomplex required for mitochondrial inner membrane protein turnover. Together with MGR3, functions in an adapter complex that targets substrates to the i-AAA protease for degradation. Required for growth of cells lacking the mitochondrial genome. This is Mitochondrial inner membrane i-AAA protease supercomplex subunit MGR1 (MGR1) from Saccharomyces cerevisiae (strain ATCC 204508 / S288c) (Baker's yeast).